An 838-amino-acid chain; its full sequence is Protein P (838 aa).

A terminal protein domain (TP) region spans residues 1–177 (MPLSYQHFRK…FCGSPYSWEQ (177 aa)). Residues 178–341 (ELQHQTSTRH…YCLTHIVNLL (164 aa)) are spacer. Disordered stretches follow at residues 215–238 (QSRL…SGSI) and 285–311 (STSK…RSQS). The span at 285–294 (STSKRQSSSG) shows a compositional bias: polar residues. The interval 342 to 685 (EDWGPCTEHG…YLHLYPVARQ (344 aa)) is polymerase/reverse transcriptase domain (RT). A Reverse transcriptase domain is found at 352–595 (EHNIRIPRTP…YSLNFMGYVI (244 aa)). The Mg(2+) site is built by Asp-424, Asp-546, and Asp-547.

Belongs to the hepadnaviridae P protein family.

The enzyme catalyses DNA(n) + a 2'-deoxyribonucleoside 5'-triphosphate = DNA(n+1) + diphosphate. It carries out the reaction Endonucleolytic cleavage to 5'-phosphomonoester.. With respect to regulation, activated by host HSP70 and HSP40 in vitro to be able to bind the epsilon loop of the pgRNA. Because deletion of the RNase H region renders the protein partly chaperone-independent, the chaperones may be needed indirectly to relieve occlusion of the RNA-binding site by this domain. Inhibited by several reverse-transcriptase inhibitors: Lamivudine, Adefovir and Entecavir. Functionally, multifunctional enzyme that converts the viral RNA genome into dsDNA in viral cytoplasmic capsids. This enzyme displays a DNA polymerase activity that can copy either DNA or RNA templates, and a ribonuclease H (RNase H) activity that cleaves the RNA strand of RNA-DNA heteroduplexes in a partially processive 3'- to 5'-endonucleasic mode. Neo-synthesized pregenomic RNA (pgRNA) are encapsidated together with the P protein, and reverse-transcribed inside the nucleocapsid. Initiation of reverse-transcription occurs first by binding the epsilon loop on the pgRNA genome, and is initiated by protein priming, thereby the 5'-end of (-)DNA is covalently linked to P protein. Partial (+)DNA is synthesized from the (-)DNA template and generates the relaxed circular DNA (RC-DNA) genome. After budding and infection, the RC-DNA migrates in the nucleus, and is converted into a plasmid-like covalently closed circular DNA (cccDNA). The activity of P protein does not seem to be necessary for cccDNA generation, and is presumably released from (+)DNA by host nuclear DNA repair machinery. This Homo sapiens (Human) protein is Protein P.